The following is a 557-amino-acid chain: Nucleolin 1 (557 aa).

Disordered regions lie at residues 1-297 (MGKS…GGSK), 376-398 (GERGERPAFTPQSGNFRSGGDGG), and 474-557 (LVVD…FGDE). The segment covering 49–63 (QKEKAVKKVPKKVES) has biased composition (basic and acidic residues). Acidic residues-rich tracts occupy residues 64–74 (SDDSDSESEEE), 91–101 (ESSDDSSSDDE), and 124–135 (SSSDDDSSDEEV). Positions 174–184 (AKIAKPAAKDS) are enriched in low complexity. The span at 186 to 197 (SSDDDSDEDSED) shows a compositional bias: acidic residues. A compositionally biased stretch (low complexity) spans 203-217 (KKAAPAAAKAASSSD). Residues 218 to 229 (SSDEDSDEESED) show a composition bias toward acidic residues. Residues 230-247 (EKPAQKKADTKASKKSSS) show a composition bias toward basic and acidic residues. Over residues 249–263 (ESSESEEDESEDEEE) the composition is skewed to acidic residues. The segment covering 264–281 (TPKKKSSDVEMVDAEKSS) has biased composition (basic and acidic residues). One can recognise an RRM 1 domain in the interval 297–374 (KTLFAANLSF…REIRLDIAQE (78 aa)). In terms of domain architecture, RRM 2 spans 401-481 (KKIFVKGFDA…FYLVVDEPRP (81 aa)). Positions 485–503 (SSGGGGFGRGNGRFGSGGG) are enriched in gly residues.

As to quaternary structure, interacts with THAL in the nucleus. Expressed in roots, leaves, shoots and flowers.

It localises to the nucleus. It is found in the nucleolus. Its function is as follows. Involved in pre-rRNA processing and ribosome assembly. Is associated with intranucleolar chromatin and pre-ribosomal particles and plays a role in controlling activation and repression of a specific subset of rRNA genes located in distinctive nucleolar organizer regions. Binds specifically rDNA chromatin and may be required to maintain rDNA chromatin structure, but is probably not required for the overall histone methylation status of 45S rRNA genes. Involved in leaf polarity establishment by functioning cooperatively with AS1 to repress abaxial genes ARF3, ARF4, KAN1, KAN2, YAB1 and YAB5, and the knox homeobox genes KNAT1, KNAT2, KNAT6, and STM to promote adaxial development in leaf primordia at shoot apical meristems at high temperatures. The polypeptide is Nucleolin 1 (Arabidopsis thaliana (Mouse-ear cress)).